The primary structure comprises 79 residues: Dolichyl-diphosphooligosaccharide--protein glycosyltransferase subunit TMEM258 (79 aa).

N-acetylmethionine is present on Met-1. 2 helical membrane passes run 17–37 (VFPHLTVVLLAIGMFFTAWFF) and 59–79 (VASLFMGFGVLFLLLWVGIYI).

Belongs to the OST5 family. As to quaternary structure, component of the oligosaccharyltransferase (OST) complex. OST exists in two different complex forms which contain common core subunits RPN1, RPN2, OST48, OST4, DAD1 and TMEM258, either STT3A or STT3B as catalytic subunits, and form-specific accessory subunits. STT3A complex assembly occurs through the formation of 3 subcomplexes. Subcomplex 1 contains RPN1 and TMEM258, subcomplex 2 contains the STT3A-specific subunits STT3A, DC2/OSTC, and KCP2 as well as the core subunit OST4, and subcomplex 3 contains RPN2, DAD1, and OST48. The STT3A complex can form stable complexes with the Sec61 complex or with both the Sec61 and TRAP complexes.

It is found in the membrane. It localises to the endoplasmic reticulum. The protein resides in the cytoplasm. It functions in the pathway protein modification; protein glycosylation. Subunit of the oligosaccharyl transferase (OST) complex that catalyzes the initial transfer of a defined glycan (Glc(3)Man(9)GlcNAc(2) in eukaryotes) from the lipid carrier dolichol-pyrophosphate to an asparagine residue within an Asn-X-Ser/Thr consensus motif in nascent polypeptide chains, the first step in protein N-glycosylation. N-glycosylation occurs cotranslationally and the complex associates with the Sec61 complex at the channel-forming translocon complex that mediates protein translocation across the endoplasmic reticulum (ER). All subunits are required for a maximal enzyme activity. Involved in ER homeostasis in the colonic epithelium. The protein is Dolichyl-diphosphooligosaccharide--protein glycosyltransferase subunit TMEM258 of Bos taurus (Bovine).